We begin with the raw amino-acid sequence, 278 residues long: Dermonecrotic toxin LbSicTox-betaIA1a (278 aa).

Residue His12 is part of the active site. Mg(2+) is bound by residues Glu32 and Asp34. Catalysis depends on His48, which acts as the Nucleophile. 2 disulfides stabilise this stretch: Cys52–Cys58 and Cys54–Cys197. Asp92 contacts Mg(2+). N-linked (GlcNAc...) asparagine glycosylation occurs at Asn258.

This sequence belongs to the arthropod phospholipase D family. Class II subfamily. Class IIb sub-subfamily. In terms of tissue distribution, expressed by the venom gland.

Its subcellular location is the secreted. The enzyme catalyses an N-(acyl)-sphingosylphosphoethanolamine = an N-(acyl)-sphingosyl-1,3-cyclic phosphate + ethanolamine. It catalyses the reaction a 1-acyl-sn-glycero-3-phosphocholine = a 1-acyl-sn-glycero-2,3-cyclic phosphate + choline. The catalysed reaction is a 1-acyl-sn-glycero-3-phosphoethanolamine = a 1-acyl-sn-glycero-2,3-cyclic phosphate + ethanolamine. In terms of biological role, this toxin does not show activity on sphingomyelin (SM) and does not show dermonecrotic activities. This toxin is a member of dermonecrotic toxins that cleave the phosphodiester linkage between the phosphate and headgroup of certain phospholipids (sphingolipid and lysolipid substrates), forming an alcohol (often choline) and a cyclic phosphate. It may act on ceramide phosphoethanolamine (CPE), lysophosphatidylcholine (LPC) and lysophosphatidylethanolamine (LPE), but not on lysophosphatidylserine (LPS), and lysophosphatidylglycerol (LPG). It may act by transphosphatidylation, releasing exclusively cyclic phosphate products as second products. This chain is Dermonecrotic toxin LbSicTox-betaIA1a, found in Loxosceles boneti (North American fiddleback spider).